A 461-amino-acid chain; its full sequence is UPF0210 protein Ddes_0622 (461 aa).

This sequence belongs to the UPF0210 family. Homodimer.

The polypeptide is UPF0210 protein Ddes_0622 (Desulfovibrio desulfuricans (strain ATCC 27774 / DSM 6949 / MB)).